A 482-amino-acid chain; its full sequence is MMETMPNWLKQRAFLTPDRTAIEIEEEKVTFMQLHEKVVSVCEHLTHVGVKRGQKVAVLMKNGIEMITVIHALSYAGAVAVLLNTRLSREELLWQMDDAEVICLVTDQDFEAKDIPVYSFAEVMNGPKEEASIQEEFSLREAMTIIYTSGTTGKPKGVILTYGNHWASAVGSSLNLGLRDDDCWLACMPMFHVGGLSLLMKNIMYGMRILLVPKYDADFIHKALQTRGVTIISVVSKMLTDLLERLGEGTYPSSLRCMLLGGGPAPKPLLETCVDKGIPVYQTYGMTETSSQICTLSADYMLTKVGSAGKPLFQCQLRIEKDGVVVPPFAEGEIVVKGPNVTGGYFNREDATRETIQNGWLHTGDLGYLDEEGFLYVLDRRSDLIISGGENIYPAQIEEVLLSHPMVAEAGVVGMTDDKWGQVPAAFVVKSGEITEEEILHFCEEKLAKYKVPKKACFLEELPRNASKKLLRRELRQLVEEM.

It belongs to the ATP-dependent AMP-binding enzyme family. MenE subfamily.

The catalysed reaction is 2-succinylbenzoate + ATP + CoA = 2-succinylbenzoyl-CoA + AMP + diphosphate. It functions in the pathway quinol/quinone metabolism; 1,4-dihydroxy-2-naphthoate biosynthesis; 1,4-dihydroxy-2-naphthoate from chorismate: step 5/7. The protein operates within quinol/quinone metabolism; menaquinone biosynthesis. Converts 2-succinylbenzoate (OSB) to 2-succinylbenzoyl-CoA (OSB-CoA). The polypeptide is 2-succinylbenzoate--CoA ligase (Bacillus cereus (strain AH820)).